The following is a 470-amino-acid chain: E3 SUMO-protein ligase EGR2 (470 aa).

Positions 126–141 (PPASTTASSSVTSASP) are enriched in low complexity. Disordered stretches follow at residues 126–153 (PPAS…GVCT), 159–178 (PELD…SGCT), and 184–211 (DPSA…YPSP). N6-acetyllysine; by EP300 is present on Lys247. Residues 275–344 (GPSAGVTGPG…RPYPCPAEGC (70 aa)) form a disordered region. The segment covering 281–291 (TGPGASGGGEG) has biased composition (gly residues). 3 C2H2-type zinc fingers span residues 337–361 (YPCP…IRIH), 367–389 (FQCR…IRTH), and 395–417 (FACD…TKIH). The segment at 408 to 470 (DERKRHTKIH…ASCTSRTRTP (63 aa)) is disordered. Basic residues predominate over residues 412–422 (RHTKIHLRQKE). Residues 426 to 439 (SAPSSSASAQSSAS) are compositionally biased toward low complexity. Positions 440–450 (GPGGSQAGGSL) are enriched in gly residues.

Belongs to the EGR C2H2-type zinc-finger protein family. Interacts with HCFC1. Interacts with WWP2. Interacts with UBC9. Interacts with CITED1. Interacts (via phosphorylated form) with SFN. In terms of processing, ubiquitinated by WWP2 leading to proteasomal degradation. Post-translationally, acetylated at Lys-247. May be deacetylated by HDAC6, HDAC10 or SIRT1.

It localises to the nucleus. Its pathway is protein modification; protein sumoylation. Sequence-specific DNA-binding transcription factor. Plays a role in hindbrain segmentation by regulating the expression of a subset of homeobox containing genes and in Schwann cell myelination by regulating the expression of genes involved in the formation and maintenance of myelin. Binds to two EGR2-consensus sites EGR2A (5'-CTGTAGGAG-3') and EGR2B (5'-ATGTAGGTG-3') in the HOXB3 enhancer and promotes HOXB3 transcriptional activation. Binds to specific DNA sites located in the promoter region of HOXA4, HOXB2 and ERBB2. Regulates hindbrain segmentation by controlling the expression of Hox genes, such as HOXA4, HOXB3 and HOXB2, and thereby specifying odd and even rhombomeres. Promotes the expression of HOXB3 in the rhombomere r5 in the hindbrain. Regulates myelination in the peripheral nervous system after birth, possibly by regulating the expression of myelin proteins, such as MPZ, and by promoting the differentiation of Schwann cells. Involved in the development of the jaw openener musculature, probably by playing a role in its innervation through trigeminal motor neurons. May play a role in adipogenesis, possibly by regulating the expression of CEBPB. Its function is as follows. E3 SUMO-protein ligase helping SUMO1 conjugation to its coregulators NAB1 and NAB2, whose sumoylation down-regulates EGR2 transcriptional activity. This Rattus norvegicus (Rat) protein is E3 SUMO-protein ligase EGR2 (Egr2).